Consider the following 538-residue polypeptide: MDRAKFIFVTGGVLSSLGKGISSSSIATLLQHCNYQVSILKIDPYINIDPGTMSPLEHGEVFVTSDGAETDLDIGHYERFLNRNLTRLNNFTTGQIFSSVIENERKGEYLGKTIQIVPHVTDEIKRRIKSAAKGLDFLIVEVGGTVGDMEGMFYLEAIRQLKLELGNEKVINVHVTLIPYIQTTNELKTKPTQHSVQELRRLGVTPQIILARSPKPLDKELKNKIALSCDVEQDSVIVATDTKSIYACPILFLQEGILTPIARRFNLNKLHPKMAAWNTLVEKIIAPKHKVKIGFVGKYLSLKESYKSLIEALIHAGAHLDTQVNIEWLDSENFNEKTDLEGVDAILVPGGFGERGIEGKICAIQRARLEKLPFLGICLGMQLAIVEFCRNVLGLKGANSTEFNQRCEYPVVYLIGDFMDQNHQKQVRTYNSPLGGTMRLGEYECEIMPNSLLEKAYKKPSIKERHRHRYEINPKYRQEWENKGLKVVGFGSNHLIEAIELEDHPFFVGVQFHPEFTSRLQSPNPIILDFIKSALSKS.

The segment at 1 to 267 (MDRAKFIFVT…LTPIARRFNL (267 aa)) is amidoligase domain. Serine 15 is a binding site for CTP. Position 15 (serine 15) interacts with UTP. ATP-binding positions include 16–21 (SLGKGI) and aspartate 73. Residues aspartate 73 and glutamate 141 each contribute to the Mg(2+) site. CTP contacts are provided by residues 148–150 (DME), 188–193 (KTKPTQ), and lysine 224. UTP contacts are provided by residues 188–193 (KTKPTQ) and lysine 224. Residues 292 to 538 (KIGFVGKYLS…DFIKSALSKS (247 aa)) form the Glutamine amidotransferase type-1 domain. Glycine 351 is an L-glutamine binding site. Residue cysteine 378 is the Nucleophile; for glutamine hydrolysis of the active site. L-glutamine-binding positions include 379-382 (LGMQ), glutamate 402, and arginine 469. Residues histidine 513 and glutamate 515 contribute to the active site.

It belongs to the CTP synthase family. Homotetramer.

It catalyses the reaction UTP + L-glutamine + ATP + H2O = CTP + L-glutamate + ADP + phosphate + 2 H(+). The enzyme catalyses L-glutamine + H2O = L-glutamate + NH4(+). It carries out the reaction UTP + NH4(+) + ATP = CTP + ADP + phosphate + 2 H(+). It functions in the pathway pyrimidine metabolism; CTP biosynthesis via de novo pathway; CTP from UDP: step 2/2. Allosterically activated by GTP, when glutamine is the substrate; GTP has no effect on the reaction when ammonia is the substrate. The allosteric effector GTP functions by stabilizing the protein conformation that binds the tetrahedral intermediate(s) formed during glutamine hydrolysis. Inhibited by the product CTP, via allosteric rather than competitive inhibition. Functionally, catalyzes the ATP-dependent amination of UTP to CTP with either L-glutamine or ammonia as the source of nitrogen. Regulates intracellular CTP levels through interactions with the four ribonucleotide triphosphates. The sequence is that of CTP synthase from Helicobacter pylori (strain ATCC 700392 / 26695) (Campylobacter pylori).